Here is a 163-residue protein sequence, read N- to C-terminus: Periplasmic nitrate reductase, electron transfer subunit (163 aa).

An N-terminal signal peptide occupies residues 1–32; the sequence is MRSQDPSRRLSRRLWTLFALALCLVTGTVALA. The heme c site is built by His-76, Cys-90, Cys-93, His-94, His-111, Cys-130, Cys-133, and His-134.

It belongs to the NapB family. In terms of assembly, component of the periplasmic nitrate reductase NapAB complex composed of NapA and NapB. Binds 2 heme C groups per subunit.

Its subcellular location is the periplasm. Functionally, electron transfer subunit of the periplasmic nitrate reductase complex NapAB. Receives electrons from the membrane-anchored tetraheme c-type NapC protein and transfers these to NapA subunit, thus allowing electron flow between membrane and periplasm. Essential for periplasmic nitrate reduction with nitrate as the terminal electron acceptor. The sequence is that of Periplasmic nitrate reductase, electron transfer subunit from Neorhizobium galegae (Rhizobium galegae).